The following is a 1236-amino-acid chain: MVHPVQVGKRTRMSFGKVNDVTEMPNLIEVQLDSYEWFLREGLHEVFDDINPITNFTGNLVLEFVDYKLDMENIKYSVEECKERDATYAAPLKVSIRLQNNETGEIKEQEVFMGDFPLMTEQGTFVINGAERVIVSQLVRSPGVYYNYSIDKSGKKLYSSTVIPNRGAWLEYETDSNDVIYVRIDKTRKLSISILARAMGLGSDQELLDFFGEEERFRASIEKDNTKTKEEALLEIYKRLRPGEPPTVDSAISLIDTLFFDAKRYDLSRVGRYKFNKKLALNLRIANQVAATDIVNPQTGEIMVEKGQKISRLVAEEIQNAGVKSVDVLIEDKVIRVISNNFVDLKKQVSFDISDLGIKELVHYPTLKEILDNFSDEASIKEEIKKNISKLIPKHIIRDDIFATISYELGLTYGIGYVDDIDHLGNRRLRSVGELLQNQFRIGLSRMERVVKERMTIQDQEAITPQMLINIRPVAAAIKEFFGSSQLSQFMDQTNPLSELTHKRRLSALGPGGLSRERAGFEVRDVHHSHYGRMCPIETPEGPNIGLINSLATFAKVNEYGFIETPYRIVDKENGRATDEIRYFTADEEDQCLIAEAKEPMDENGHFINKKVRVRHLEDILVVPTTDVDLIDVSARQIVSVATAMIPFLENDDASRALMGSNMQRQAVPLLSPQAPIVGTGIEFKAAVDSGVLPKAKNAGVVTYVSGSEIRVKRDSDGGTDVYKLLKFKRSNSGTCINQRPIVDTGEIVYKNQVIADGPSTDLGEIALGKNIRMGFITWEGYNYEDAMLISEELVREDVFTSMHIEEYECEARDTKLGPEEITRDIPNVSDDALKDVDDRGIIRIGAEVRSGDILVGKVTPKGETELTAEERLLRAIFGEKAREVRDTSLRVPHGEAGIIVDIKVFTRENGDELNPGVNELVRCYIAQKRKISVGDKMAGRHGNKGVISRILPEEDMPFLPDGRPLQICLNPLGVPSRMNIGQVLEVHLGWAASHLGWHIATPVFDGATQPEITECMIKAGFREDAKTILYDGRTGEPFDNPVTVGIMYILKLHHLVDDKIHARSTGPYSLVTQQPLGGKAQFGGQRFGEMEVWALEAYGAAHTLQEILTVKSDDVVGRVKTYEAIVKGENIPEPGVPESFKVLIKELQALCLDIKVLNDEHEEVTLKEFVDEDMANLEVNIEGTEEIMVPEPDVLDDDSYDQNNDEDIDEIDYDESVDIADLETELELDDFNDEH.

Residues 1193-1212 (PDVLDDDSYDQNNDEDIDEI) form a disordered region. Residues 1194 to 1212 (DVLDDDSYDQNNDEDIDEI) show a composition bias toward acidic residues.

The protein belongs to the RNA polymerase beta chain family. In terms of assembly, the RNAP catalytic core consists of 2 alpha, 1 beta, 1 beta' and 1 omega subunit. When a sigma factor is associated with the core the holoenzyme is formed, which can initiate transcription.

The catalysed reaction is RNA(n) + a ribonucleoside 5'-triphosphate = RNA(n+1) + diphosphate. In terms of biological role, DNA-dependent RNA polymerase catalyzes the transcription of DNA into RNA using the four ribonucleoside triphosphates as substrates. The protein is DNA-directed RNA polymerase subunit beta of Clostridium beijerinckii (strain ATCC 51743 / NCIMB 8052) (Clostridium acetobutylicum).